A 331-amino-acid polypeptide reads, in one-letter code: MPEILDQARTQVLENGVGLDEAGVLAVLNLPDEHLPAALQLAHEVRMRWCGPEVEVEGIVSLKTGGCPEDCHFCSQSGLFTSPVRAVWLDIPSLVEAAKQTAKTGATEFCIVAAVRGPDDRLMRQLREGVAAIQAEVDIQVAASVGMLTQEQVDELVEMGVHRYNHNLETCRSYFPNVVTTHSWEERWETLRMVRESGMEVCCGGILGLGESVEQRAEFAAQLAELDPHEVPLNFLNPRPGTPLGDRSVVEGKDALRAIAAFRLAMPRTILRYAGGRELTLGDLGTRSGLLGGINAVIVGNYLTTLGRPATTDLELLEDLKMPVKALSATL.

The region spanning 52-277 (PEVEVEGIVS…RTILRYAGGR (226 aa)) is the Radical SAM core domain. Positions 67, 71, and 74 each coordinate [4Fe-4S] cluster. [2Fe-2S] cluster is bound by residues Cys110, Cys202, and Arg272.

This sequence belongs to the radical SAM superfamily. Biotin synthase family. Homodimer. The cofactor is [4Fe-4S] cluster. [2Fe-2S] cluster is required as a cofactor.

The enzyme catalyses (4R,5S)-dethiobiotin + (sulfur carrier)-SH + 2 reduced [2Fe-2S]-[ferredoxin] + 2 S-adenosyl-L-methionine = (sulfur carrier)-H + biotin + 2 5'-deoxyadenosine + 2 L-methionine + 2 oxidized [2Fe-2S]-[ferredoxin]. It participates in cofactor biosynthesis; biotin biosynthesis; biotin from 7,8-diaminononanoate: step 2/2. Its function is as follows. Catalyzes the conversion of dethiobiotin (DTB) to biotin by the insertion of a sulfur atom into dethiobiotin via a radical-based mechanism. The chain is Biotin synthase from Salinispora tropica (strain ATCC BAA-916 / DSM 44818 / JCM 13857 / NBRC 105044 / CNB-440).